The sequence spans 303 residues: Protein transport protein SEC13-2 (303 aa).

WD repeat units lie at residues Ala-7 to Ser-46, Gly-53 to Gln-95, Val-102 to Thr-143, Ala-149 to Val-202, Gly-209 to Asp-251, and Lys-261 to Glu-300.

Belongs to the WD repeat SEC13 family. In terms of assembly, the COPII coat is composed of at least 5 proteins: the SEC23/24 complex, the SEC13/31 complex, and the protein SAR1. Component of the nuclear pore complex (NPC). NPC constitutes the exclusive means of nucleocytoplasmic transport. NPCs allow the passive diffusion of ions and small molecules and the active, nuclear transport receptor-mediated bidirectional transport of macromolecules such as proteins, RNAs, ribonucleoparticles (RNPs), and ribosomal subunits across the nuclear envelope. Due to its 8-fold rotational symmetry, all subunits are present with 8 copies or multiples thereof.

The protein resides in the cytoplasmic vesicle. The protein localises to the COPII-coated vesicle membrane. Its subcellular location is the endoplasmic reticulum membrane. It is found in the nucleus. It localises to the nuclear pore complex. Component of the coat protein complex II (COPII) which promotes the formation of transport vesicles from the endoplasmic reticulum (ER). The coat has two main functions, the physical deformation of the endoplasmic reticulum membrane into vesicles and the selection of cargo molecules. It also functions as a component of the nuclear pore complex (NPC). NPC components, collectively referred to as nucleoporins (NUPs), can play the role of both NPC structural components and of docking or interaction partners for transiently associated nuclear transport factors. SEC13 is required for efficient mRNA export from the nucleus to the cytoplasm and for correct nuclear pore biogenesis and distribution. In Candida glabrata (strain ATCC 2001 / BCRC 20586 / JCM 3761 / NBRC 0622 / NRRL Y-65 / CBS 138) (Yeast), this protein is Protein transport protein SEC13-2 (SEC132).